Here is a 740-residue protein sequence, read N- to C-terminus: Elongation factor 2 (740 aa).

The tr-type G domain occupies 23–264 (AQIRNAGTLA…MIIEHIPPPN (242 aa)). GTP contacts are provided by residues 32-39 (AHVDHGKT), 98-102 (DTPGH), and 152-155 (NKID). Residue His605 is modified to Diphthamide.

It belongs to the TRAFAC class translation factor GTPase superfamily. Classic translation factor GTPase family. EF-G/EF-2 subfamily.

It localises to the cytoplasm. In terms of biological role, catalyzes the GTP-dependent ribosomal translocation step during translation elongation. During this step, the ribosome changes from the pre-translocational (PRE) to the post-translocational (POST) state as the newly formed A-site-bound peptidyl-tRNA and P-site-bound deacylated tRNA move to the P and E sites, respectively. Catalyzes the coordinated movement of the two tRNA molecules, the mRNA and conformational changes in the ribosome. This is Elongation factor 2 from Pyrobaculum aerophilum (strain ATCC 51768 / DSM 7523 / JCM 9630 / CIP 104966 / NBRC 100827 / IM2).